Consider the following 207-residue polypeptide: 2,3-bisphosphoglycerate-dependent phosphoglycerate mutase (207 aa).

Substrate-binding positions include Arg10–Asn17, Thr23–Gly24, Arg62, Glu89–Tyr92, Lys100, Arg116–Arg117, and Gly160–Asn161. His11 functions as the Tele-phosphohistidine intermediate in the catalytic mechanism. Residue Glu89 is the Proton donor/acceptor of the active site.

Belongs to the phosphoglycerate mutase family. BPG-dependent PGAM subfamily. In terms of assembly, homodimer.

It catalyses the reaction (2R)-2-phosphoglycerate = (2R)-3-phosphoglycerate. Its pathway is carbohydrate degradation; glycolysis; pyruvate from D-glyceraldehyde 3-phosphate: step 3/5. Its function is as follows. Catalyzes the interconversion of 2-phosphoglycerate and 3-phosphoglycerate. The chain is 2,3-bisphosphoglycerate-dependent phosphoglycerate mutase from Afipia carboxidovorans (strain ATCC 49405 / DSM 1227 / KCTC 32145 / OM5) (Oligotropha carboxidovorans).